The chain runs to 224 residues: Urease accessory protein UreF (224 aa).

The protein belongs to the UreF family. As to quaternary structure, ureD, UreF and UreG form a complex that acts as a GTP-hydrolysis-dependent molecular chaperone, activating the urease apoprotein by helping to assemble the nickel containing metallocenter of UreC. The UreE protein probably delivers the nickel.

It localises to the cytoplasm. In terms of biological role, required for maturation of urease via the functional incorporation of the urease nickel metallocenter. In Pseudomonas savastanoi pv. phaseolicola (strain 1448A / Race 6) (Pseudomonas syringae pv. phaseolicola (strain 1448A / Race 6)), this protein is Urease accessory protein UreF.